Reading from the N-terminus, the 332-residue chain is Ribose-phosphate pyrophosphokinase (332 aa).

ATP-binding positions include 43 to 45 (DGE) and 102 to 103 (RQ). Mg(2+) is bound by residues His136 and Asp176. The active site involves Lys199. Residues Arg201, Asp225, and 229–233 (DTGGT) contribute to the D-ribose 5-phosphate site.

It belongs to the ribose-phosphate pyrophosphokinase family. Class I subfamily. In terms of assembly, homohexamer. Mg(2+) serves as cofactor.

The protein resides in the cytoplasm. It catalyses the reaction D-ribose 5-phosphate + ATP = 5-phospho-alpha-D-ribose 1-diphosphate + AMP + H(+). The protein operates within metabolic intermediate biosynthesis; 5-phospho-alpha-D-ribose 1-diphosphate biosynthesis; 5-phospho-alpha-D-ribose 1-diphosphate from D-ribose 5-phosphate (route I): step 1/1. Functionally, involved in the biosynthesis of the central metabolite phospho-alpha-D-ribosyl-1-pyrophosphate (PRPP) via the transfer of pyrophosphoryl group from ATP to 1-hydroxyl of ribose-5-phosphate (Rib-5-P). This Mycoplasma genitalium (strain ATCC 33530 / DSM 19775 / NCTC 10195 / G37) (Mycoplasmoides genitalium) protein is Ribose-phosphate pyrophosphokinase.